Consider the following 189-residue polypeptide: Interferon alpha-21 (189 aa).

The signal sequence occupies residues 1 to 23; the sequence is MALSFSLLMAVLVLSYKSICSLG. 2 cysteine pairs are disulfide-bonded: Cys-24–Cys-122 and Cys-52–Cys-162.

Belongs to the alpha/beta interferon family.

It is found in the secreted. Functionally, produced by macrophages, IFN-alpha have antiviral activities. Interferon stimulates the production of two enzymes: a protein kinase and an oligoadenylate synthetase. In Homo sapiens (Human), this protein is Interferon alpha-21 (IFNA21).